Consider the following 464-residue polypeptide: MAASCLVLLALCLLLPLLLLGGWKRWRRGRAARHVVAVVLGDVGRSPRMQYHALSLAMHGFSVTLLGFCNSKPHDELLQNNRIQIVGLTELQSLAVGPRVFQYGVKVVLQAMYLLWKLMWREPGAYIFLQNPPGLPSIAVCWFVGCLCGSKLVIDWHNYGYSIMGLVHGPNHPLVLLAKWYEKFFGRLSHLNLCVTNAMREDLADNWHIRAVTVYDKPASFFKETPLDLQHRLFMKLGSMHSPFRARSEPEDPVTERSAFTERDAGSGLVTRLRERPALLVSSTSWTEDEDFSILLAALEKFEQLTLDGHNLPSLVCVITGKGPLREYYSRLIHQKHFQHIQVCTPWLEAEDYPLLLGSADLGVCLHTSSSGLDLPMKVVDMFGCCLPVCAVNFKCLHELVKHEENGLVFEDSEELAAQLQMLFSNFPDPAGKLNQFRKNLRESQQLRWDESWVQTVLPLVMDT.

The Lumenal segment spans residues 1–2 (MA). Residues 3-23 (ASCLVLLALCLLLPLLLLGGW) traverse the membrane as a helical segment. At 24–99 (KRWRRGRAAR…ELQSLAVGPR (76 aa)) the chain is on the cytoplasmic side. The segment at residues 100-120 (VFQYGVKVVLQAMYLLWKLMW) is an intramembrane region (helical). Over 121 to 464 (REPGAYIFLQ…QTVLPLVMDT (344 aa)) the chain is Cytoplasmic. At Ser242 the chain carries Phosphoserine. Residues 243–262 (PFRARSEPEDPVTERSAFTE) form a disordered region.

This sequence belongs to the glycosyltransferase group 1 family. Glycosyltransferase 33 subfamily.

It localises to the endoplasmic reticulum membrane. It carries out the reaction an N,N'-diacetylchitobiosyl-diphospho-di-trans,poly-cis-dolichol + GDP-alpha-D-mannose = a beta-D-Man-(1-&gt;4)-beta-D-GlcNAc-(1-&gt;4)-alpha-D-GlcNAc-diphospho-di-trans,poly-cis-dolichol + GDP + H(+). It functions in the pathway protein modification; protein glycosylation. Its function is as follows. Mannosyltransferase that operates in the biosynthetic pathway of dolichol-linked oligosaccharides, the glycan precursors employed in protein asparagine (N)-glycosylation. The assembly of dolichol-linked oligosaccharides begins on the cytosolic side of the endoplasmic reticulum membrane and finishes in its lumen. The sequential addition of sugars to dolichol pyrophosphate produces dolichol-linked oligosaccharides containing fourteen sugars, including two GlcNAcs, nine mannoses and three glucoses. Once assembled, the oligosaccharide is transferred from the lipid to nascent proteins by oligosaccharyltransferases. Catalyzes, on the cytoplasmic face of the endoplasmic reticulum, the addition of the first mannose residues to the dolichol-linked oligosaccharide chain, to produce Man1GlcNAc(2)-PP-dolichol core oligosaccharide. Man1GlcNAc(2)-PP-dolichol is a substrate for ALG2, the following enzyme in the biosynthetic pathway. The polypeptide is Chitobiosyldiphosphodolichol beta-mannosyltransferase (Homo sapiens (Human)).